Consider the following 498-residue polypeptide: Zinc finger protein 79 (498 aa).

Residues 1-23 (MLEEGVLPSPGPALPQEENTGEE) form a disordered region. A KRAB domain is found at 38-109 (TFFSSVTVAF…EGEDLRSPSP (72 aa)). C2H2-type zinc fingers lie at residues 193-215 (YACN…QKSH), 221-243 (YECS…QRIH), 249-271 (YKCS…QRTH), 277-299 (YRCS…QRIH), 305-327 (YECS…QRTH), 333-355 (YKCS…QRIH), 361-383 (YRCA…QRTH), 389-411 (YKCS…QKTH), 417-439 (YKCN…HIIH), 445-467 (YECN…QRIH), and 473-495 (YECS…QRLH).

Belongs to the krueppel C2H2-type zinc-finger protein family.

It localises to the nucleus. May be involved in transcriptional regulation. This Homo sapiens (Human) protein is Zinc finger protein 79 (ZNF79).